The chain runs to 176 residues: ATP-dependent protease subunit HslV (176 aa).

Threonine 5 is a catalytic residue. Na(+) contacts are provided by serine 161, cysteine 164, and threonine 167.

Belongs to the peptidase T1B family. HslV subfamily. A double ring-shaped homohexamer of HslV is capped on each side by a ring-shaped HslU homohexamer. The assembly of the HslU/HslV complex is dependent on binding of ATP.

It localises to the cytoplasm. It catalyses the reaction ATP-dependent cleavage of peptide bonds with broad specificity.. Allosterically activated by HslU binding. In terms of biological role, protease subunit of a proteasome-like degradation complex believed to be a general protein degrading machinery. In Desulfitobacterium hafniense (strain Y51), this protein is ATP-dependent protease subunit HslV.